The chain runs to 809 residues: Cell division control protein 48 homolog A (809 aa).

Ser2 is modified (N-acetylserine). Phosphoserine is present on Ser41. ADP contacts are provided by residues Gly210, 248-256 (GPPGSGKTL), and His387. Residue 521-529 (GPPGCGKTL) coordinates ATP. The segment at 782–809 (AGSGATTGVADPFATSAAAAGDDDDLYN) is disordered. Residues 791–801 (ADPFATSAAAA) show a composition bias toward low complexity.

It belongs to the AAA ATPase family. Homohexamer. Interacts with SERK1, GRF6, KAPP and SYP31, but not with KNOLLE. Component of the SERK1 signaling complex, composed of KAPP, CDC48A, GRF6 or GRF7, SERK1, SERK2, SERK3/BAK1 and BRI1. Interacts with PUX1, PUX2, PUX3, PUX4, PUX5, PUX7 and PUX11 via its N-terminus. Phosphorylated on at least one threonine residue and on Ser-41 by SERK1.

Its subcellular location is the nucleus. It localises to the cytoplasm. The protein resides in the cytoskeleton. The protein localises to the phragmoplast. It is found in the cell membrane. Probably functions in cell division and growth processes. Interacts with certain SNAREs as part of specialized membrane fusion events where vesicles from the same organelle fuse (homotypic fusion). This is Cell division control protein 48 homolog A (CDC48A) from Arabidopsis thaliana (Mouse-ear cress).